The primary structure comprises 108 residues: Parvalbumin alpha (108 aa).

N-acetylalanine is present on A1. EF-hand domains follow at residues 37 to 72 (MSANDVKKVFKAIDADASGFIEEEELKFVLKSFAAD) and 76 to 108 (LTDAETKAFLKAADKDGDGKIGIDEFETLVHEA). Residues D50, D52, S54, F56, E58, E61, D89, D91, D93, K95, and E100 each coordinate Ca(2+).

It belongs to the parvalbumin family.

Functionally, in muscle, parvalbumin is thought to be involved in relaxation after contraction. It binds two calcium ions. The protein is Parvalbumin alpha of Esox lucius (Northern pike).